Reading from the N-terminus, the 135-residue chain is DNA-directed RNA polymerase subunit omega (135 aa).

The disordered stretch occupies residues 84–106 (IAGHSSHVSPSRSSRHTGLGKSF).

Belongs to the RNA polymerase subunit omega family. In terms of assembly, the RNAP catalytic core consists of 2 alpha, 1 beta, 1 beta' and 1 omega subunit. When a sigma factor is associated with the core the holoenzyme is formed, which can initiate transcription.

The enzyme catalyses RNA(n) + a ribonucleoside 5'-triphosphate = RNA(n+1) + diphosphate. In terms of biological role, promotes RNA polymerase assembly. Latches the N- and C-terminal regions of the beta' subunit thereby facilitating its interaction with the beta and alpha subunits. The chain is DNA-directed RNA polymerase subunit omega from Anaplasma phagocytophilum (strain HZ).